The primary structure comprises 239 residues: ATP-dependent dethiobiotin synthetase BioD (239 aa).

13–18 (EIGKTV) contributes to the ATP binding site. Thr-17 provides a ligand contact to Mg(2+). The active site involves Lys-38. Position 42 (Thr-42) interacts with substrate. Mg(2+) contacts are provided by Lys-59 and Glu-111. ATP-binding positions include 111-114 (EGAG), 175-176 (NQ), and 204-206 (PSL).

It belongs to the dethiobiotin synthetase family. In terms of assembly, homodimer. Requires Mg(2+) as cofactor.

It localises to the cytoplasm. The enzyme catalyses (7R,8S)-7,8-diammoniononanoate + CO2 + ATP = (4R,5S)-dethiobiotin + ADP + phosphate + 3 H(+). It functions in the pathway cofactor biosynthesis; biotin biosynthesis; biotin from 7,8-diaminononanoate: step 1/2. Functionally, catalyzes a mechanistically unusual reaction, the ATP-dependent insertion of CO2 between the N7 and N8 nitrogen atoms of 7,8-diaminopelargonic acid (DAPA, also called 7,8-diammoniononanoate) to form a ureido ring. This chain is ATP-dependent dethiobiotin synthetase BioD, found in Geobacillus sp. (strain WCH70).